Reading from the N-terminus, the 526-residue chain is Serine/threonine-protein kinase ppk22 (526 aa).

Disordered regions lie at residues 1–24 (MARETEFNDKSPSSTDDGMSQSHF) and 39–106 (AATV…PRPL). Residues 10–23 (KSPSSTDDGMSQSH) are compositionally biased toward polar residues. Low complexity predominate over residues 65-78 (NQLNELDLNDSSDQ). Position 154 is a phosphoserine (Ser-154). The Protein kinase domain occupies 155-445 (FEKIRLLGQG…ASDIKQHPFF (291 aa)). Residues 161–169 (LGQGDVGKV) and Lys-184 each bind ATP. Asp-280 acts as the Proton acceptor in catalysis. Residue Thr-339 is modified to Phosphothreonine. The residue at position 341 (Ser-341) is a Phosphoserine. At Tyr-348 the chain carries Phosphotyrosine. Positions 446 to 526 (RHIQWALLRS…SVTLHHAGDE (81 aa)) constitute an AGC-kinase C-terminal domain. The segment at 499–526 (MHSSTPVNEQSNPFDSFSSVTLHHAGDE) is disordered. Positions 500 to 519 (HSSTPVNEQSNPFDSFSSVT) are enriched in polar residues.

It belongs to the protein kinase superfamily. AGC Ser/Thr protein kinase family.

The protein localises to the cytoplasm. The enzyme catalyses L-seryl-[protein] + ATP = O-phospho-L-seryl-[protein] + ADP + H(+). It carries out the reaction L-threonyl-[protein] + ATP = O-phospho-L-threonyl-[protein] + ADP + H(+). The protein is Serine/threonine-protein kinase ppk22 (ppk22) of Schizosaccharomyces pombe (strain 972 / ATCC 24843) (Fission yeast).